We begin with the raw amino-acid sequence, 778 residues long: MNKKILETLEFDKVKALFEPHLLTEQGLEQLRQLAPTAKADKIKQAFAEMKEMQALFVEQPHFTILSTKEIAGVCKRLEMGADLNIEEFLLLKRVLLASRELQNFYANLENVSLEELALWFEKLHDFPQLQGNLQAFNDAGFIENFASEELARIRRKIHDSESQVRDVLQDLLKQKAQMLTEGIVASRNGRQVLPVKNTYRNKIAGVVHDISASGNTVYIEPREVVKLSEEIASLRADERYEMLRILQEISERVRPHAAEIANDAWIIGHLDLIRAKVRFIQERQAVVPQLSENQEIQLLHVCHPLVKNAVANDVYFGQDLTAIVITGPNTGGKTIMLKTLGLTQVMAQSGLPILADKGSRVGIFEEIFADIGDEQSIEQSLSTFSSHMTNIVDILGKVNQHSLLLLDELGAGTDPQEGAALAMAILEDLRLRQIKTMATTHYPELKAYGIETAFVQNASMEFDTATLRPTYRFMQGVPGRSNAFEIAKRLGLSEVIVGDASQQIDQDNDVNRIIEQLEEQTLESRKRLDNIREVEQENLKMNRALKKLYNELNREKETELNKAREQAAEIVDMALSESDQILKNLHSKSQLKPHEIIEAKAKLKKLAPEKVDLSKNKVLQKAKKKRAPKVGDDIVVLSYGQRGTLTSQLKDGRWEAQVGLIKMTLEEKEFDLVQAQQEKPVKKKQVNVVKRTSGRGPQARLDLRGKRYEEAMNELDTFIDQALLNNMAQVDIIHGIGTGVIREGVTKYLQRNKHVKSFGYAPQNAGGSGATIVTFKG.

328 to 335 (GPNTGGKT) lines the ATP pocket. The Smr domain occupies 702–777 (LDLRGKRYEE…GSGATIVTFK (76 aa)).

This sequence belongs to the DNA mismatch repair MutS family. MutS2 subfamily. As to quaternary structure, homodimer. Binds to stalled ribosomes, contacting rRNA.

In terms of biological role, endonuclease that is involved in the suppression of homologous recombination and thus may have a key role in the control of bacterial genetic diversity. Functionally, acts as a ribosome collision sensor, splitting the ribosome into its 2 subunits. Detects stalled/collided 70S ribosomes which it binds and splits by an ATP-hydrolysis driven conformational change. Acts upstream of the ribosome quality control system (RQC), a ribosome-associated complex that mediates the extraction of incompletely synthesized nascent chains from stalled ribosomes and their subsequent degradation. Probably generates substrates for RQC. The protein is Endonuclease MutS2 of Streptococcus pneumoniae (strain P1031).